Consider the following 341-residue polypeptide: UDP-N-acetylenolpyruvoylglucosamine reductase (341 aa).

One can recognise an FAD-binding PCMH-type domain in the interval 13–185 (FGVEQSCLSM…TAVGLRLPKA (173 aa)). Arginine 161 is an active-site residue. The active-site Proton donor is the serine 231. Residue glutamate 327 is part of the active site.

Belongs to the MurB family. FAD serves as cofactor.

It is found in the cytoplasm. It catalyses the reaction UDP-N-acetyl-alpha-D-muramate + NADP(+) = UDP-N-acetyl-3-O-(1-carboxyvinyl)-alpha-D-glucosamine + NADPH + H(+). It participates in cell wall biogenesis; peptidoglycan biosynthesis. Cell wall formation. The chain is UDP-N-acetylenolpyruvoylglucosamine reductase from Shewanella sp. (strain MR-7).